The primary structure comprises 154 residues: Ribosomal RNA large subunit methyltransferase H (154 aa).

Positions 70 and 102 each coordinate S-adenosyl-L-methionine.

The protein belongs to the RNA methyltransferase RlmH family. Homodimer.

Its subcellular location is the cytoplasm. The catalysed reaction is pseudouridine(1915) in 23S rRNA + S-adenosyl-L-methionine = N(3)-methylpseudouridine(1915) in 23S rRNA + S-adenosyl-L-homocysteine + H(+). In terms of biological role, specifically methylates the pseudouridine at position 1915 (m3Psi1915) in 23S rRNA. This Hyphomonas neptunium (strain ATCC 15444) protein is Ribosomal RNA large subunit methyltransferase H.